A 134-amino-acid polypeptide reads, in one-letter code: Citrolysin protein 2 (134 aa).

This chain is Citrolysin protein 2, found in Citrobacter freundii.